Reading from the N-terminus, the 187-residue chain is PsbQ-like protein 3, chloroplastic (187 aa).

The N-terminal 32 residues, 1 to 32, are a transit peptide targeting the chloroplast; sequence MAISKPPPLHFTFFHNQDSSIDTSDSNLALSI. A thylakoid-targeting transit peptide spans 33–60; the sequence is DTSRRRRDVLLTISGTLIPQLFFFDRKR.

Belongs to the PsbQ family. As to quaternary structure, subunit of the lumenal protuberance of the NDH complex.

It localises to the plastid. Its subcellular location is the chloroplast thylakoid membrane. Required for both formation and activity of the chloroplast NAD(P)H dehydrogenase (NDH) complex. The chain is PsbQ-like protein 3, chloroplastic (PQL3) from Arabidopsis thaliana (Mouse-ear cress).